Consider the following 149-residue polypeptide: Large ribosomal subunit protein bL20m (149 aa).

Residues 1–9 constitute a mitochondrion transit peptide; sequence MVFLTTRLW.

It belongs to the bacterial ribosomal protein bL20 family. Component of the mitochondrial ribosome large subunit (39S) which comprises a 16S rRNA and about 50 distinct proteins. Interacts with OXA1L.

It localises to the mitochondrion. The protein is Large ribosomal subunit protein bL20m (Mrpl20) of Mus musculus (Mouse).